The chain runs to 103 residues: MTKSELIEILARRQAHLKSDDVDLAVKSLLEMMGQALSDGDRIEIRGFGSFSLHYRPPRLGRNPKTGESVALPGKHVPHFKPGKELRERVSSVVPVDMSDTTD.

The segment at 59 to 82 (RLGRNPKTGESVALPGKHVPHFKP) is disordered.

This sequence belongs to the bacterial histone-like protein family. As to quaternary structure, heterodimer of an alpha and a beta chain.

This protein is one of the two subunits of integration host factor, a specific DNA-binding protein that functions in genetic recombination as well as in transcriptional and translational control. The polypeptide is Integration host factor subunit beta (Xanthomonas oryzae pv. oryzae (strain MAFF 311018)).